Reading from the N-terminus, the 445-residue chain is uncharacterized protein (445 aa).

This is an uncharacterized protein from Xanthomonas euvesicatoria.